Here is a 150-residue protein sequence, read N- to C-terminus: uncharacterized protein (150 aa).

A signal peptide spans 1-22; it reads MVIALKRFSFLASIATLTVLNA. The N-palmitoyl cysteine moiety is linked to residue Cys-23. Residue Cys-23 is the site of S-diacylglycerol cysteine attachment.

Belongs to the MG067/MG068/MG395 family.

It is found in the cell membrane. This is an uncharacterized protein from Mycoplasma pneumoniae (strain ATCC 29342 / M129 / Subtype 1) (Mycoplasmoides pneumoniae).